The primary structure comprises 81 residues: Cell division protein ZapB (81 aa).

The stretch at 5–81 forms a coiled coil; sequence LEVFEKLESK…QALLGRMEEV (77 aa). The interval 43–64 is disordered; that stretch reads VHSAQNGREELERENQQLREQQ. Basic and acidic residues predominate over residues 49–59; sequence GREELERENQQ.

Belongs to the ZapB family. As to quaternary structure, homodimer. The ends of the coiled-coil dimer bind to each other, forming polymers. Interacts with FtsZ.

It is found in the cytoplasm. Non-essential, abundant cell division factor that is required for proper Z-ring formation. It is recruited early to the divisome by direct interaction with FtsZ, stimulating Z-ring assembly and thereby promoting cell division earlier in the cell cycle. Its recruitment to the Z-ring requires functional FtsA or ZipA. The protein is Cell division protein ZapB of Enterobacter sp. (strain 638).